A 442-amino-acid polypeptide reads, in one-letter code: NAD(P)H sulfur oxidoreductase (CoA-dependent) (442 aa).

13 to 14 is an FAD binding site; the sequence is AA. Position 24 (Arg24) interacts with CoA. FAD is bound by residues 35 to 36 and 42 to 44; these read EA and HAP. Residues 41-45, 62-63, and Arg72 each bind CoA; these read SHAPC and HY. Cys45 serves as the catalytic Redox-active. The FAD site is built by Val82, Asp280, and Ala298. Asn302 and Lys358 together coordinate CoA. FAD is bound at residue Tyr422. Residues Trp430 and Arg438 each contribute to the CoA site.

It belongs to the class-III pyridine nucleotide-disulfide oxidoreductase family. In terms of assembly, homodimer. FAD is required as a cofactor.

The protein localises to the cytoplasm. The enzyme catalyses hydrogen sulfide + NADP(+) = sulfur + NADPH. It catalyses the reaction hydrogen sulfide + NAD(+) = sulfur + NADH. The catalysed reaction is NADP(+) + 2 CoA = CoA-disulfide + NADPH + H(+). It carries out the reaction NAD(+) + 2 CoA = CoA-disulfide + NADH + H(+). Its function is as follows. Catalyzes the CoA-dependent reduction of elemental sulfur (S(0)) to produce hydrogen sulfide. Can use both NADPH and NADH, but shows a preference for NADPH. May enable S(0) to be used, via sulfide, for iron-sulfur cluster synthesis by SipA. Also shows coenzyme A disulfide reductase (CoADR) activity with both NADH and NADPH. However, CoADR specific activity is about 20-fold lower than the sulfur reduction assay and CoADR activity appears to be an artifactual side reaction and is not thought to have any physiological relevance. Also shows NAD(P)H oxidase activity with both NADH and NADPH. The protein is NAD(P)H sulfur oxidoreductase (CoA-dependent) of Pyrococcus furiosus (strain ATCC 43587 / DSM 3638 / JCM 8422 / Vc1).